We begin with the raw amino-acid sequence, 91 residues long: UPF0250 protein BP0104 (91 aa).

Belongs to the UPF0250 family.

This Bordetella pertussis (strain Tohama I / ATCC BAA-589 / NCTC 13251) protein is UPF0250 protein BP0104.